We begin with the raw amino-acid sequence, 172 residues long: MDRAEKREFVAWLNGAFKESGSVVVAHYTGLTVAQMSDLRSKMRDAGGSVKVAKNRLAKIALQGTESEGIVDLFTGQTVVAYANDPITAPKVAVEFAKANDKLVILGGAMGATTLNADGVKSLASLPSLDELRAKLVGMIQTPAQRLAVLTSAPAGQIARVIGAHARKNEAA.

It belongs to the universal ribosomal protein uL10 family. In terms of assembly, part of the ribosomal stalk of the 50S ribosomal subunit. The N-terminus interacts with L11 and the large rRNA to form the base of the stalk. The C-terminus forms an elongated spine to which L12 dimers bind in a sequential fashion forming a multimeric L10(L12)X complex.

Its function is as follows. Forms part of the ribosomal stalk, playing a central role in the interaction of the ribosome with GTP-bound translation factors. This chain is Large ribosomal subunit protein uL10 (rplJ), found in Brucella abortus biovar 1 (strain 9-941).